The sequence spans 122 residues: uncharacterized protein (122 aa).

One can recognise an HIT domain in the interval 10–120 (VFARILRGEI…AGRRLGPMIT (111 aa)). The Histidine triad motif signature appears at 104–108 (HLHIH).

This is an uncharacterized protein from Azospirillum brasilense.